A 464-amino-acid polypeptide reads, in one-letter code: Endo-1,4-beta-xylanase A (464 aa).

The first 33 residues, 1 to 33, serve as a signal peptide directing secretion; it reads MFRHHPTRGRRTAGLLAAALATLSAGLTAVAPA. The 310-residue stretch at 40–349 folds into the GH10 domain; the sequence is TATLGELAEA…KPAYHAIAAA (310 aa). Glutamate 166 (proton donor) is an active-site residue. The active-site Nucleophile is the glutamate 271. Residues 354 to 457 enclose the CBM2 domain; that stretch reads SPAPGGNCTA…TPADVTCTPG (104 aa).

This sequence belongs to the glycosyl hydrolase 10 (cellulase F) family. Does not require any standard metal (Mg(2+), Mn2(+), Ca(2+)). serves as cofactor.

The catalysed reaction is Endohydrolysis of (1-&gt;4)-beta-D-xylosidic linkages in xylans.. The protein operates within glycan degradation; xylan degradation. Its activity is regulated as follows. Completely inhibited by Hg(2+), unaffected by EDTA. Contributes to hydrolysis of hemicellulose, the major component of plant cell-walls. Hydrolyzes xylan to xylose and xylobiose. This chain is Endo-1,4-beta-xylanase A (xynAS9), found in Streptomyces sp.